Reading from the N-terminus, the 70-residue chain is DNA-directed RNA polymerase subunit epsilon (70 aa).

This sequence belongs to the RNA polymerase subunit epsilon family. RNAP is composed of a core of 2 alpha, a beta and a beta' subunit. The core is associated with a delta subunit, and at least one of epsilon or omega. When a sigma factor is associated with the core the holoenzyme is formed, which can initiate transcription.

It carries out the reaction RNA(n) + a ribonucleoside 5'-triphosphate = RNA(n+1) + diphosphate. A non-essential component of RNA polymerase (RNAP). This Bacillus mycoides (strain KBAB4) (Bacillus weihenstephanensis) protein is DNA-directed RNA polymerase subunit epsilon.